The primary structure comprises 185 residues: Elongation factor P (185 aa).

It belongs to the elongation factor P family.

It is found in the cytoplasm. Its pathway is protein biosynthesis; polypeptide chain elongation. Involved in peptide bond synthesis. Stimulates efficient translation and peptide-bond synthesis on native or reconstituted 70S ribosomes in vitro. Probably functions indirectly by altering the affinity of the ribosome for aminoacyl-tRNA, thus increasing their reactivity as acceptors for peptidyl transferase. This chain is Elongation factor P, found in Agathobacter rectalis (strain ATCC 33656 / DSM 3377 / JCM 17463 / KCTC 5835 / VPI 0990) (Eubacterium rectale).